The primary structure comprises 275 residues: NH(3)-dependent NAD(+) synthetase (275 aa).

Position 46–53 (46–53) interacts with ATP; the sequence is GISGGQDS. D52 contributes to the Mg(2+) binding site. R140 lines the deamido-NAD(+) pocket. T160 is a binding site for ATP. E165 provides a ligand contact to Mg(2+). Residues K173 and D180 each contribute to the deamido-NAD(+) site. ATP contacts are provided by K189 and T211. 260–261 is a binding site for deamido-NAD(+); that stretch reads HK.

This sequence belongs to the NAD synthetase family. As to quaternary structure, homodimer.

The catalysed reaction is deamido-NAD(+) + NH4(+) + ATP = AMP + diphosphate + NAD(+) + H(+). The protein operates within cofactor biosynthesis; NAD(+) biosynthesis; NAD(+) from deamido-NAD(+) (ammonia route): step 1/1. Functionally, catalyzes the ATP-dependent amidation of deamido-NAD to form NAD. Uses ammonia as a nitrogen source. The protein is NH(3)-dependent NAD(+) synthetase of Escherichia coli O17:K52:H18 (strain UMN026 / ExPEC).